Reading from the N-terminus, the 463-residue chain is Tryprostatin B synthase (463 aa).

2 residues coordinate brevianamide F: M93 and E101. The dimethylallyl diphosphate site is built by R112, K200, and Y202. Y204 lines the brevianamide F pocket. Dimethylallyl diphosphate contacts are provided by K293, Y295, Q379, Y381, Y445, and Y449.

The protein belongs to the tryptophan dimethylallyltransferase family.

The enzyme catalyses brevianamide F + dimethylallyl diphosphate = tryprostatin B + diphosphate. The protein operates within mycotoxin biosynthesis. Its function is as follows. Brevianamide F prenyltransferase; part of the gene cluster that mediates the biosynthesis of fumitremorgins, indole alkaloids that carry not only intriguing chemical structures, but also interesting biological and pharmacological activities. The biosynthesis of fumitremorgin-type alkaloids begins by condensation of the two amino acids L-tryptophan and L-proline to brevianamide F, catalyzed by the non-ribosomal peptide synthetase ftmPS/ftmA. Brevianamide F is then prenylated by the prenyltransferase ftmPT1/ftmB in the presence of dimethylallyl diphosphate, resulting in the formation of tryprostatin B. The three cytochrome P450 monooxygenases, ftmP450-1/ftmC, ftmP450-2/ftmE and ftmP450-3/FtmG, are responsible for the conversion of tryprostatin B to 6-hydroxytryprostatin B, tryprostatin A to fumitremorgin C and fumitremorgin C to 12,13-dihydroxyfumitremorgin C, respectively. The putative methyltransferase ftmMT/ftmD is expected for the conversion of 6-hydroxytryprostatin B to tryprostatin A. FtmPT2/FtmH catalyzes the prenylation of 12,13-dihydroxyfumitre-morgin C in the presence of dimethylallyl diphosphate, resulting in the formation of fumitremorgin B. Fumitremorgin B is further converted to verruculogen by ftmOx1/ftmF via the insertion of an endoperoxide bond between the two prenyl moieties. Finally, verruculogen is further converted to fumitremorgin A by the verruculogen prenyltransferase ftmPT3. In Neosartorya fischeri (strain ATCC 1020 / DSM 3700 / CBS 544.65 / FGSC A1164 / JCM 1740 / NRRL 181 / WB 181) (Aspergillus fischerianus), this protein is Tryprostatin B synthase.